Here is a 218-residue protein sequence, read N- to C-terminus: MELTLHEARVIGCLLEKEVTTPEQYPLSLNALTLACNQKTSRDPVLDLSEAQVQDALDSLNKKRLISEQSGFGSRVVKYKHRFCNTEFSELQLSSAAVAIVCLLLLRGPQTPGELRTRSNRLHDFKDVLEVEACIKQLMERDKPVLAQLPREPGKRECRYTELFSQGAEQISAASFTSADAHPLNEQDRQQLEARVTQLEEQVAELKDKLDSLIASLS.

It belongs to the UPF0502 family.

The protein is UPF0502 protein Shewana3_1622 of Shewanella sp. (strain ANA-3).